The primary structure comprises 214 residues: MRFFIDTANVEEIKKANRMGFIAGVTTNPSLVAKEGRDFNEVIQEITSIVDGPISGEVVSLEADEMIAEGRVIAKIHPNMVVKIPMTGEGLAAVKVLTEEGIKTNVTLVFSATQALLAARAGATYVSPFLGRLDDIGDDGLVLIRDIADIFEIYGIPTEIISASVRHPIHVIECAKAGADIATVPFKVFEQMLKHPLTDSGIDKFLADWEAAKK.

The Schiff-base intermediate with substrate role is filled by Lys-83.

This sequence belongs to the transaldolase family. Type 3B subfamily.

The protein localises to the cytoplasm. The catalysed reaction is D-sedoheptulose 7-phosphate + D-glyceraldehyde 3-phosphate = D-erythrose 4-phosphate + beta-D-fructose 6-phosphate. Its pathway is carbohydrate degradation; pentose phosphate pathway; D-glyceraldehyde 3-phosphate and beta-D-fructose 6-phosphate from D-ribose 5-phosphate and D-xylulose 5-phosphate (non-oxidative stage): step 2/3. Its function is as follows. Transaldolase is important for the balance of metabolites in the pentose-phosphate pathway. The polypeptide is Probable transaldolase 1 (Listeria monocytogenes serotype 4b (strain F2365)).